A 113-amino-acid polypeptide reads, in one-letter code: MADIAVPLTFTDAAANKVKTLISEEENTELKLRVYITGGGCSGFQYGFTFDEKTNDGDLIVENSGVKLVVDPMSLQYLVGGTVDYTEGLEGSRFIVNNPNASTTCGCGSSFSI.

Iron-sulfur cluster contacts are provided by Cys-41, Cys-105, and Cys-107.

Belongs to the HesB/IscA family. Homodimer. Iron-sulfur cluster serves as cofactor.

Functionally, required for insertion of 4Fe-4S clusters for at least IspG. This Histophilus somni (strain 2336) (Haemophilus somnus) protein is Iron-sulfur cluster insertion protein ErpA.